The sequence spans 295 residues: Aquaporin-9 (295 aa).

Residues 1 to 24 (MQPEGAEKGKSFKQRLVLKSSLAK) are Cytoplasmic-facing. Residues 25–43 (ETLSEFLGTFILIVLGCGC) traverse the membrane as a helical segment. At 44–57 (VAQAILSRGRFGGV) the chain is on the extracellular side. The helical transmembrane segment at 58 to 77 (ITINVGFSMAVAMAIYVAGG) threads the bilayer. The Cytoplasmic segment spans residues 78–79 (VS). Residues 80–92 (GGHINPAVSLAMC) constitute an intramembrane region (discontinuously helical). Residues 84–86 (NPA) carry the NPA 1 motif. Residues 93–98 (LFGRMK) lie on the Cytoplasmic side of the membrane. Residues 99–123 (WFKLPFYVGAQFLGAFVGAATVFGI) form a helical membrane-spanning segment. The Extracellular segment spans residues 124–160 (YYDGLMSFAGGKLLIVGENATAHIFATYPAPYLSLAN). Residues 161–178 (AFADQVVATMILLIIVFA) form a helical membrane-spanning segment. The Cytoplasmic portion of the chain corresponds to 179-190 (IFDSRNLGAPRG). The helical transmembrane segment at 191–207 (LEPIAIGLLIIVIASSL) threads the bilayer. Residues 208 to 210 (GLN) lie on the Extracellular side of the membrane. The segment at residues 211-225 (SGCAMNPARDLSPRL) is an intramembrane region (discontinuously helical). The NPA 2 motif lies at 216 to 218 (NPA). Residues 226-243 (FTALAGWGFEVFRAGNNF) are Extracellular-facing. Residues 244–264 (WWIPVVGPLVGAVIGGLIYVL) form a helical membrane-spanning segment. The Cytoplasmic segment spans residues 265-295 (VIEIHHPEPDSVFKTEQSEDKPEKYELSVIM).

Belongs to the MIP/aquaporin (TC 1.A.8) family. As to quaternary structure, homotetramer; each monomer provides an independent glycerol/water pore. Highly expressed in peripheral leukocytes. Also expressed in liver, lung, and spleen.

The protein resides in the cell membrane. It localises to the basolateral cell membrane. It carries out the reaction glycerol(in) = glycerol(out). The enzyme catalyses H2O(in) = H2O(out). It catalyses the reaction urea(in) = urea(out). The catalysed reaction is (S)-lactate(in) = (S)-lactate(out). It carries out the reaction NH4(+)(in) = NH4(+)(out). The enzyme catalyses uracil(in) = uracil(out). It catalyses the reaction adenine(out) = adenine(in). The catalysed reaction is 3-hydroxybutanoate(in) = 3-hydroxybutanoate(out). It carries out the reaction D-sorbitol(in) = D-sorbitol(out). The enzyme catalyses D-mannitol(in) = D-mannitol(out). It catalyses the reaction H2O2(out) = H2O2(in). The catalysed reaction is arsenite(in) = arsenite(out). It carries out the reaction selenite(in) = selenite(out). In terms of biological role, aquaglyceroporins form homotetrameric transmembrane channels, with each monomer independently mediating glycerol and water transport across the plasma membrane along their osmotic gradient. AQP9 is the primary route for glycerol uptake in hepatocytes, supporting hepatic gluconeogenesis. It exhibits broad specificity and may transport various small, non-charged solutes, including carbamides, polyols, purines, and pyrimidines. AQP9 may also facilitate hepatic urea extrusion. Due to its permeability to lactate, AQP9 might participate in the astrocyte-to-neuron lactate shuttle, supplying neurons with energy. Additionally, AQP9 is permeable to arsenite, contributing to arsenic excretion by the liver and providing partial protection against arsenic toxicity. It is also permeable to H2O2 in vivo. Could also be permeable to ammonium. The polypeptide is Aquaporin-9 (Homo sapiens (Human)).